A 184-amino-acid chain; its full sequence is Protein DMP2 (184 aa).

Transmembrane regions (helical) follow at residues L19–T39, L45–F65, V105–D125, and I142–F162.

Belongs to the plant DMP1 protein family. As to expression, expressed constitutively in leaves, stems, flowers, siliques and roots.

It localises to the endoplasmic reticulum membrane. The protein localises to the vacuole membrane. Its function is as follows. Involved in membrane remodeling. The chain is Protein DMP2 from Arabidopsis thaliana (Mouse-ear cress).